Reading from the N-terminus, the 34-residue chain is Cycloamanide B proprotein (34 aa).

The propeptide occupies 1–10; sequence MSDINAARLP. A cross-link (cyclopeptide (Ser-Pro)) is located at residues 11 to 17; the sequence is SFFFPIP. The propeptide occupies 18 to 34; that stretch reads CISDDIEMVLTRGESLC.

This sequence belongs to the MSDIN fungal toxin family. Post-translationally, processed by the macrocyclase-peptidase enzyme POPB to yield a cyclic decapeptide. POPB first removes 10 residues from the N-terminus. Conformational trapping of the remaining peptide forces the enzyme to release this intermediate rather than proceed to macrocyclization. The enzyme rebinds the remaining peptide in a different conformation and catalyzes macrocyclization of the N-terminal 7 residues.

Its function is as follows. Cyclic heptapeptide that belongs to the MSDIN-like toxin family responsible for a large number of food poisoning cases and deaths. Cycloaminide B is non-toxic to mammals but shows immunosuppressive activity, probably through the inhibition of the action of interleukin-1 and interleukin-2. The chain is Cycloamanide B proprotein from Amanita phalloides (Death cap).